We begin with the raw amino-acid sequence, 137 residues long: Small ribosomal subunit protein uS12 (137 aa).

Asp-102 is modified (3-methylthioaspartic acid).

It belongs to the universal ribosomal protein uS12 family. As to quaternary structure, part of the 30S ribosomal subunit. Contacts proteins S8 and S17. May interact with IF1 in the 30S initiation complex.

Functionally, with S4 and S5 plays an important role in translational accuracy. Its function is as follows. Interacts with and stabilizes bases of the 16S rRNA that are involved in tRNA selection in the A site and with the mRNA backbone. Located at the interface of the 30S and 50S subunits, it traverses the body of the 30S subunit contacting proteins on the other side and probably holding the rRNA structure together. The combined cluster of proteins S8, S12 and S17 appears to hold together the shoulder and platform of the 30S subunit. This Mycoplasmopsis agalactiae (strain NCTC 10123 / CIP 59.7 / PG2) (Mycoplasma agalactiae) protein is Small ribosomal subunit protein uS12.